A 342-amino-acid chain; its full sequence is Ribosomal RNA small subunit methyltransferase C (342 aa).

Belongs to the methyltransferase superfamily. RsmC family. Monomer.

Its subcellular location is the cytoplasm. The catalysed reaction is guanosine(1207) in 16S rRNA + S-adenosyl-L-methionine = N(2)-methylguanosine(1207) in 16S rRNA + S-adenosyl-L-homocysteine + H(+). In terms of biological role, specifically methylates the guanine in position 1207 of 16S rRNA in the 30S particle. This chain is Ribosomal RNA small subunit methyltransferase C, found in Shewanella sp. (strain MR-7).